The primary structure comprises 308 residues: Cysteine proteinase 3 (308 aa).

The N-terminal stretch at 1-13 is a signal peptide; that stretch reads MFALILFVSLACA. The propeptide at 14-92 is activation peptide; that stretch reads NEVAFKQWAA…TSNVKAAVKA (79 aa). 2 disulfides stabilise this stretch: C112/C153 and C146/C186. Residue C115 is part of the active site. Residues H251 and N271 contribute to the active site.

The protein belongs to the peptidase C1 family.

The protein localises to the cytoplasm. It is found in the cytoplasmic vesicle. Its subcellular location is the phagosome. The catalysed reaction is Hydrolysis of proteins, including basement membrane collagen and azocasein. Preferential cleavage: Arg-Arg-|-Xaa in small molecule substrates including Z-Arg-Arg-|-NHMec.. Its function is as follows. Cysteine protease which may be involved in pathogenicity. The sequence is that of Cysteine proteinase 3 from Entamoeba histolytica (strain ATCC 30459 / HM-1:IMSS / ABRM).